The sequence spans 794 residues: ATP-dependent RNA helicase SUPV3L1, mitochondrial (794 aa).

Residues 1–30 constitute a mitochondrion transit peptide; sequence MRRCAWPLLRLSSRVGLALRHGGAVRLRQA. The Helicase ATP-binding domain maps to 182-322; that stretch reads EARAIQRKII…AIDLVTELMY (141 aa). 195–202 contacts ATP; it reads GPTNSGKT. A Helicase C-terminal domain is found at 341–506; the sequence is VLDYALESLD…GLHPTPEQIE (166 aa). 2 disordered regions span residues 678-741 and 764-794; these read EVMS…HGRG and EWQD…KKKK. Positions 689–704 are enriched in basic and acidic residues; sequence TKRDARTVSDHRDAKS.

The protein belongs to the helicase family. Requires Mg(2+) as cofactor. It depends on Mn(2+) as a cofactor.

The protein localises to the nucleus. Its subcellular location is the mitochondrion matrix. It localises to the mitochondrion nucleoid. It catalyses the reaction ATP + H2O = ADP + phosphate + H(+). Functionally, major helicase player in mitochondrial RNA metabolism. Component of the mitochondrial degradosome (mtEXO) complex, that degrades 3' overhang double-stranded RNA with a 3'-to-5' directionality in an ATP-dependent manner. ATPase and ATP-dependent multisubstrate helicase, able to unwind double-stranded (ds) DNA and RNA, and RNA/DNA heteroduplexes in the 5'-to-3' direction. Plays a role in the RNA surveillance system in mitochondria; regulates the stability of mature mRNAs, the removal of aberrantly formed mRNAs and the rapid degradation of non coding processing intermediates. Also implicated in recombination and chromatin maintenance pathways. May protect cells from apoptosis. Associates with mitochondrial DNA. The sequence is that of ATP-dependent RNA helicase SUPV3L1, mitochondrial (SUPV3L1) from Gallus gallus (Chicken).